The following is a 446-amino-acid chain: Carbamoyl phosphate synthase small chain, chloroplastic (446 aa).

The span at Met1–Ser32 shows a compositional bias: low complexity. The segment at Met1–Gly44 is disordered. Residues Met1–Arg50 constitute a chloroplast transit peptide. The region spanning His261–Leu446 is the Glutamine amidotransferase type-1 domain. Residue Cys336 is the Nucleophile of the active site. Active-site residues include His420 and Glu422.

It belongs to the CarA family. Heterodimer composed of 2 chains; the small (or glutamine) chain promotes the hydrolysis of glutamine to ammonia, which is used by the large (or ammonia) chain to synthesize carbamoyl phosphate.

It localises to the plastid. It is found in the chloroplast. It catalyses the reaction hydrogencarbonate + L-glutamine + 2 ATP + H2O = carbamoyl phosphate + L-glutamate + 2 ADP + phosphate + 2 H(+). It carries out the reaction L-glutamine + H2O = L-glutamate + NH4(+). It functions in the pathway amino-acid biosynthesis; L-arginine biosynthesis; carbamoyl phosphate from bicarbonate: step 1/1. The protein operates within pyrimidine metabolism; UMP biosynthesis via de novo pathway; (S)-dihydroorotate from bicarbonate: step 1/3. Functionally, small subunit of the arginine-specific carbamoyl phosphate synthase (CPSase). CPSase catalyzes the formation of carbamoyl phosphate from the ammonia moiety of glutamine, carbonate, and phosphate donated by ATP, the first step of the arginine biosynthetic pathway. The small subunit (glutamine amidotransferase) binds and cleaves glutamine to supply the large subunit with the substrate ammonia. The chain is Carbamoyl phosphate synthase small chain, chloroplastic (CARA) from Oryza sativa subsp. japonica (Rice).